The following is an 857-amino-acid chain: Glucans biosynthesis glucosyltransferase H (857 aa).

6 helical membrane-spanning segments follow: residues 142–162, 196–216, 515–535, 572–592, 606–626, and 682–702; these read ILLA…KGIL, ILIL…TALM, VFLT…FLVL, LFST…ILIW, TLSM…RMIF, and FLWW…VSVI.

It belongs to the glycosyltransferase 2 family. OpgH subfamily.

It localises to the cell inner membrane. It functions in the pathway glycan metabolism; osmoregulated periplasmic glucan (OPG) biosynthesis. Its function is as follows. Involved in the biosynthesis of osmoregulated periplasmic glucans (OPGs). This Pseudomonas putida (strain ATCC 700007 / DSM 6899 / JCM 31910 / BCRC 17059 / LMG 24140 / F1) protein is Glucans biosynthesis glucosyltransferase H.